The following is a 440-amino-acid chain: MARFFQPKKHSTLDTKHQPVTIERLDHQGSGLAFLHKKPLFVDGALPGEEVLIQLTENKSKYARGQLIKVLKPSAERVAPFCAHYAQCGGCDLQHLDRAGQIHHKQQALSQLMVKFAGQSLALSAPVCSDDQGYRRRARLSLMWDKKTQQLQLGFRRKQSKAIVNVTDCPVLEPSLNALLPDLNALLSEWSQPERLGHVELVKGDNTRVLVLRHLGALIEQDQQRLTDFASQNQLTLYLMLEAGELQHVQGEAPYCEETGSRLSFLPSHFIQVNRAVNQHMVAQALNWLEVSPQEHVLDLFCGLGNFTLPLAKQAQAVVGVEGVDEMVQHATHNAKLNQINNVAFYQANLEQDMTSASWAQQKFAKVLLDPARAGAEGIVDQLSALGAKRVVYVSCNPATLARDSQSLLSQGFRLEKLGMLDMFPHTSHLESMALFVKKG.

One can recognise a TRAM domain in the interval 11–69 (STLDTKHQPVTIERLDHQGSGLAFLHKKPLFVDGALPGEEVLIQLTENKSKYARGQLIK). [4Fe-4S] cluster is bound by residues C82, C88, C91, and C169. S-adenosyl-L-methionine is bound by residues Q272, F301, N306, E322, N349, and D370. Residue C396 is the Nucleophile of the active site.

It belongs to the class I-like SAM-binding methyltransferase superfamily. RNA M5U methyltransferase family. RlmD subfamily.

The enzyme catalyses uridine(1939) in 23S rRNA + S-adenosyl-L-methionine = 5-methyluridine(1939) in 23S rRNA + S-adenosyl-L-homocysteine + H(+). Functionally, catalyzes the formation of 5-methyl-uridine at position 1939 (m5U1939) in 23S rRNA. This chain is 23S rRNA (uracil(1939)-C(5))-methyltransferase RlmD, found in Vibrio cholerae serotype O1 (strain ATCC 39541 / Classical Ogawa 395 / O395).